A 44-amino-acid chain; its full sequence is Photosystem I reaction center subunit IX (44 aa).

A helical transmembrane segment spans residues tryptophan 9 to valine 29.

It belongs to the PsaJ family.

The protein resides in the cellular thylakoid membrane. May help in the organization of the PsaE and PsaF subunits. This is Photosystem I reaction center subunit IX from Prochlorococcus marinus (strain MIT 9211).